The following is a 90-amino-acid chain: Probable Fe(2+)-trafficking protein (90 aa).

Belongs to the Fe(2+)-trafficking protein family.

Its function is as follows. Could be a mediator in iron transactions between iron acquisition and iron-requiring processes, such as synthesis and/or repair of Fe-S clusters in biosynthetic enzymes. In Azotobacter vinelandii (strain DJ / ATCC BAA-1303), this protein is Probable Fe(2+)-trafficking protein.